Here is a 700-residue protein sequence, read N- to C-terminus: Polyribonucleotide nucleotidyltransferase (700 aa).

Residues aspartate 486 and aspartate 492 each contribute to the Mg(2+) site. In terms of domain architecture, KH spans 554–613 (PKIISTTINPDKIREVIGPGGKMINKIIDETGVKIDINDDGRVYIFSSDIQAGKRARSMI). One can recognise an S1 motif domain in the interval 623–691 (GQVFLGRVIR…KQGRVNLSRK (69 aa)).

Belongs to the polyribonucleotide nucleotidyltransferase family. The cofactor is Mg(2+).

Its subcellular location is the cytoplasm. The catalysed reaction is RNA(n+1) + phosphate = RNA(n) + a ribonucleoside 5'-diphosphate. In terms of biological role, involved in mRNA degradation. Catalyzes the phosphorolysis of single-stranded polyribonucleotides processively in the 3'- to 5'-direction. This chain is Polyribonucleotide nucleotidyltransferase, found in Acetivibrio thermocellus (strain ATCC 27405 / DSM 1237 / JCM 9322 / NBRC 103400 / NCIMB 10682 / NRRL B-4536 / VPI 7372) (Clostridium thermocellum).